The sequence spans 30 residues: Kalata-B16 (30 aa).

A cross-link (cyclopeptide (Gly-Asp)) is located at residues 1-30; the sequence is GIPCAESCVYIPCTITALLGCKCQDKVCYD. Intrachain disulfides connect Cys4-Cys21, Cys8-Cys23, and Cys13-Cys28.

In terms of processing, this is a cyclic peptide.

In terms of biological role, probably participates in a plant defense mechanism. The polypeptide is Kalata-B16 (Oldenlandia affinis).